The primary structure comprises 185 residues: Protein-lysine palmitoyltransferase CyaC (185 aa).

Residues His33 and Asp102 contribute to the active site.

It belongs to the RTX toxin acyltransferase family. As to quaternary structure, homodimer.

The protein resides in the cytoplasm. It catalyses the reaction hexadecanoyl-[ACP] + L-lysyl-[protein] = N(6)-hexadecanoyl-L-lysyl-[protein] + holo-[ACP] + H(+). The catalysed reaction is (9Z)-hexadecenoyl-[ACP] + L-lysyl-[protein] = N(6)-[(9Z)-hexadecenoyl]-L-lysyl-[protein] + holo-[ACP] + H(+). Protein-lysine palmitoyltransferase that catalyzes palmitoylation of the protoxin (CyaA) at two internal lysine residues, thereby converting it to the active toxin. In Bordetella bronchiseptica (strain ATCC BAA-588 / NCTC 13252 / RB50) (Alcaligenes bronchisepticus), this protein is Protein-lysine palmitoyltransferase CyaC.